Here is a 328-residue protein sequence, read N- to C-terminus: tRNA methyltransferase 10 homolog A (328 aa).

Disordered stretches follow at residues 1–91 (MSSE…RKRV) and 281–328 (HKAC…PVLQ). Phosphoserine is present on S22. Positions 43–83 (RQLKKLMKQKQWEEQREQRKEKRKEKRKRKKLERRQLESNS) form a coiled coil. Positions 52–62 (KQWEEQREQRK) are enriched in basic and acidic residues. Positions 63-75 (EKRKEKRKRKKLE) are enriched in basic residues. Residues 88 to 278 (RKRVRRDVAR…TILPQRKGAV (191 aa)) enclose the SAM-dependent MTase TRM10-type domain. Basic and acidic residues predominate over residues 305-319 (ESCRDNPDSPQKDEQ).

The protein belongs to the class IV-like SAM-binding methyltransferase superfamily. TRM10 family. Interacts with tRNA.

Its subcellular location is the nucleus. It localises to the nucleolus. The enzyme catalyses guanosine(9) in tRNA + S-adenosyl-L-methionine = N(1)-methylguanosine(9) in tRNA + S-adenosyl-L-homocysteine + H(+). S-adenosyl-L-methionine-dependent guanine N(1)-methyltransferase that catalyzes the formation of N(1)-methylguanine at position 9 (m1G9) in tRNAs. Probably not able to catalyze formation of N(1)-methyladenine at position 9 (m1A9) in tRNAs. The polypeptide is tRNA methyltransferase 10 homolog A (Trmt10a) (Mus musculus (Mouse)).